A 227-amino-acid polypeptide reads, in one-letter code: Transcriptional regulatory protein TdiR (227 aa).

Residues 11–125 enclose the Response regulatory domain; that stretch reads TVFVVDDEAS…DLLDAVNAAL (115 aa). D60 is modified (4-aspartylphosphate). Positions 141–206 constitute an HTH luxR-type domain; the sequence is HLDLLATLSQ…DLMHFVMRGS (66 aa). A DNA-binding region (H-T-H motif) is located at residues 165-184; it reads SKEIAKLLGISYKTVEAHRG.

In terms of processing, phosphorylated by TdiS.

Functionally, member of the two-component regulatory system TdiR/TdiS, which probably regulates transcription of toluene catabolic genes (bss operon). Binds to DNA. The sequence is that of Transcriptional regulatory protein TdiR (tdiR) from Thauera aromatica.